The following is a 114-amino-acid chain: U17-barytoxin-Tl1d (114 aa).

Residues 1–20 (MKTIIVFLSLLVLATKFGDA) form the signal peptide. A propeptide spanning residues 21–74 (NEGVNQEQMKEVIQNEFREDFLNEMAPMSLLQQLEAIESTLLEKEADRNSRQKR) is cleaved from the precursor. 3 disulfide bridges follow: C75/C88, C82/C93, and C87/C108.

It belongs to the neurotoxin 14 (magi-1) family. 03 (ICK-30-40) subfamily. In terms of tissue distribution, expressed by the venom gland.

It is found in the secreted. Functionally, ion channel inhibitor. The chain is U17-barytoxin-Tl1d from Trittame loki (Brush-footed trapdoor spider).